A 264-amino-acid polypeptide reads, in one-letter code: uncharacterized protein (264 aa).

Residues 19–45 (AQEESMEQLKDINTKIDNSEKKISLEN) are a coiled coil.

This is an uncharacterized protein from Acanthamoeba polyphaga mimivirus (APMV).